The chain runs to 76 residues: DNA-directed RNA polymerase subunit epsilon (76 aa).

This sequence belongs to the RNA polymerase subunit epsilon family. As to quaternary structure, RNAP is composed of a core of 2 alpha, a beta and a beta' subunit. The core is associated with a delta subunit, and at least one of epsilon or omega. When a sigma factor is associated with the core the holoenzyme is formed, which can initiate transcription.

The enzyme catalyses RNA(n) + a ribonucleoside 5'-triphosphate = RNA(n+1) + diphosphate. A non-essential component of RNA polymerase (RNAP). This Streptococcus mutans serotype c (strain ATCC 700610 / UA159) protein is DNA-directed RNA polymerase subunit epsilon.